Reading from the N-terminus, the 302-residue chain is uncharacterized protein (302 aa).

Glu48 is a catalytic residue.

The protein belongs to the PhzF family.

This is an uncharacterized protein from Clostridium acetobutylicum (strain ATCC 824 / DSM 792 / JCM 1419 / IAM 19013 / LMG 5710 / NBRC 13948 / NRRL B-527 / VKM B-1787 / 2291 / W).